The chain runs to 89 residues: MTISKERKEEVISEHGAAAGDTGSPEVQIAILTERINGLTEHMRTHRKDYASRRGLLGLVSRRRRLLDYVRGQDPQRYLDIIGKLGIRK.

Over residues 1 to 13 (MTISKERKEEVIS) the composition is skewed to basic and acidic residues. The interval 1–24 (MTISKERKEEVISEHGAAAGDTGS) is disordered.

It belongs to the universal ribosomal protein uS15 family. Part of the 30S ribosomal subunit. Forms a bridge to the 50S subunit in the 70S ribosome, contacting the 23S rRNA.

Functionally, one of the primary rRNA binding proteins, it binds directly to 16S rRNA where it helps nucleate assembly of the platform of the 30S subunit by binding and bridging several RNA helices of the 16S rRNA. Forms an intersubunit bridge (bridge B4) with the 23S rRNA of the 50S subunit in the ribosome. This is Small ribosomal subunit protein uS15 from Rhodopirellula baltica (strain DSM 10527 / NCIMB 13988 / SH1).